Here is a 677-residue protein sequence, read N- to C-terminus: Methionine--tRNA ligase (677 aa).

The short motif at 15-25 is the 'HIGH' region element; that stretch reads PYANGSIHLGH. Cys146, Cys149, Cys159, and Cys162 together coordinate Zn(2+). A 'KMSKS' region motif is present at residues 333-337; that stretch reads KMSKS. Lys336 is an ATP binding site. Residues 575–677 enclose the tRNA-binding domain; the sequence is DFAKVDLRVA…EGAKPGQQVK (103 aa).

It belongs to the class-I aminoacyl-tRNA synthetase family. MetG type 1 subfamily. As to quaternary structure, homodimer. It depends on Zn(2+) as a cofactor.

The protein localises to the cytoplasm. The enzyme catalyses tRNA(Met) + L-methionine + ATP = L-methionyl-tRNA(Met) + AMP + diphosphate. Is required not only for elongation of protein synthesis but also for the initiation of all mRNA translation through initiator tRNA(fMet) aminoacylation. The chain is Methionine--tRNA ligase from Enterobacter sp. (strain 638).